A 183-amino-acid chain; its full sequence is Dual-action ribosomal maturation protein DarP (183 aa).

It belongs to the DarP family.

Its subcellular location is the cytoplasm. Its function is as follows. Member of a network of 50S ribosomal subunit biogenesis factors which assembles along the 30S-50S interface, preventing incorrect 23S rRNA structures from forming. Promotes peptidyl transferase center (PTC) maturation. The sequence is that of Dual-action ribosomal maturation protein DarP from Escherichia coli O6:H1 (strain CFT073 / ATCC 700928 / UPEC).